The primary structure comprises 272 residues: Ribosomal RNA small subunit methyltransferase A (272 aa).

The S-adenosyl-L-methionine site is built by N18, L20, G45, E66, D91, and N113.

Belongs to the class I-like SAM-binding methyltransferase superfamily. rRNA adenine N(6)-methyltransferase family. RsmA subfamily.

The protein localises to the cytoplasm. The catalysed reaction is adenosine(1518)/adenosine(1519) in 16S rRNA + 4 S-adenosyl-L-methionine = N(6)-dimethyladenosine(1518)/N(6)-dimethyladenosine(1519) in 16S rRNA + 4 S-adenosyl-L-homocysteine + 4 H(+). Its function is as follows. Specifically dimethylates two adjacent adenosines (A1518 and A1519) in the loop of a conserved hairpin near the 3'-end of 16S rRNA in the 30S particle. May play a critical role in biogenesis of 30S subunits. This Proteus mirabilis (strain HI4320) protein is Ribosomal RNA small subunit methyltransferase A.